Here is an 888-residue protein sequence, read N- to C-terminus: Glutamate receptor 3 (888 aa).

An N-terminal signal peptide occupies residues 1–22; that stretch reads MGQSVLRAVFFLVLGLLGHSHG. Topologically, residues 23–546 are extracellular; it reads GFPNTISIGG…GVFSFLDPLA (524 aa). N57, N260, N374, N409, and N416 each carry an N-linked (GlcNAc...) asparagine glycan. C85 and C334 form a disulfide bridge. P502, T504, and R509 together coordinate L-glutamate. A helical membrane pass occupies residues 547 to 567; it reads YEIWMCIVFAYIGVSVVLFLV. Residues 568–596 are Cytoplasmic-facing; sequence SRFSPYEWHLEDNNEEPRDPQSPPDPPNE. An intramembrane region (helical; Pore-forming) is located at residues 597 to 612; it reads FGIFNSLWFSLGAFMQ. An intramembrane segment occupies 613–615; sequence QGC. C615 is lipidated: S-palmitoyl cysteine. Topologically, residues 616-621 are cytoplasmic; it reads DISPRS. The chain crosses the membrane as a helical span at residues 622–642; it reads LSGRIVGGVWWFFTLIIISSY. The Extracellular portion of the chain corresponds to 643 to 817; the sequence is TANLAAFLTV…DKTSALSLSN (175 aa). L-glutamate-binding residues include S680, T681, and E731. A disulfide bridge links C744 with C799. The helical transmembrane segment at 818–838 threads the bilayer; that stretch reads VAGVFYILVGGLGLAMMVALI. The Cytoplasmic segment spans residues 839–888; it reads EFCYKSRAESKRMKLTKNTQNFKPAPATNTQNYATYREGYNVYGTESVKI. The S-palmitoyl cysteine moiety is linked to residue C841. 2 positions are modified to phosphotyrosine: Y871 and Y881.

This sequence belongs to the glutamate-gated ion channel (TC 1.A.10.1) family. GRIA3 subfamily. In terms of assembly, homotetramer or heterotetramer of pore-forming glutamate receptor subunits. Tetramers may be formed by the dimerization of dimers. Interacts with PICK1, GRIP1 and GRIP2. Found in a complex with GRIA1, GRIA2, GRIA4, CNIH2, CNIH3, CACNG2, CACNG3, CACNG4, CACNG5, CACNG7 and CACNG8. Interacts with CACNG5. Found in a complex with GRIA1, GRIA2, GRIA4, DLG4, CACNG8 and CNIH2.

It localises to the cell membrane. The protein localises to the postsynaptic cell membrane. It is found in the postsynaptic density membrane. It catalyses the reaction Ca(2+)(in) = Ca(2+)(out). Ionotropic glutamate receptor that functions as a ligand-gated cation channel, gated by L-glutamate and glutamatergic agonists such as alpha-amino-3-hydroxy-5-methyl-4-isoxazolepropionic acid (AMPA), quisqualic acid, and kainic acid. L-glutamate acts as an excitatory neurotransmitter at many synapses in the central nervous system and plays an important role in fast excitatory synaptic transmission by inducing long-term potentiation. Binding of the excitatory neurotransmitter L-glutamate induces a conformation change, leading to the opening of the cation channel, and thereby converts the chemical signal to an electrical impulse upon entry of calcium. The receptor then desensitizes rapidly and enters a transient inactive state, characterized by the presence of bound agonist. In the presence of CACNG8, shows resensitization which is characterized by a delayed accumulation of current flux upon continued application of glutamate. The chain is Glutamate receptor 3 from Mus musculus (Mouse).